Consider the following 562-residue polypeptide: Dihydroxy-acid dehydratase (562 aa).

C51 provides a ligand contact to [2Fe-2S] cluster. D83 serves as a coordination point for Mg(2+). Residue C124 participates in [2Fe-2S] cluster binding. 2 residues coordinate Mg(2+): D125 and K126. K126 bears the N6-carboxylysine mark. [2Fe-2S] cluster is bound at residue C196. Position 448 (E448) interacts with Mg(2+). Catalysis depends on S474, which acts as the Proton acceptor.

This sequence belongs to the IlvD/Edd family. Homodimer. It depends on [2Fe-2S] cluster as a cofactor. The cofactor is Mg(2+).

The catalysed reaction is (2R)-2,3-dihydroxy-3-methylbutanoate = 3-methyl-2-oxobutanoate + H2O. It carries out the reaction (2R,3R)-2,3-dihydroxy-3-methylpentanoate = (S)-3-methyl-2-oxopentanoate + H2O. It participates in amino-acid biosynthesis; L-isoleucine biosynthesis; L-isoleucine from 2-oxobutanoate: step 3/4. Its pathway is amino-acid biosynthesis; L-valine biosynthesis; L-valine from pyruvate: step 3/4. Functions in the biosynthesis of branched-chain amino acids. Catalyzes the dehydration of (2R,3R)-2,3-dihydroxy-3-methylpentanoate (2,3-dihydroxy-3-methylvalerate) into 2-oxo-3-methylpentanoate (2-oxo-3-methylvalerate) and of (2R)-2,3-dihydroxy-3-methylbutanoate (2,3-dihydroxyisovalerate) into 2-oxo-3-methylbutanoate (2-oxoisovalerate), the penultimate precursor to L-isoleucine and L-valine, respectively. The polypeptide is Dihydroxy-acid dehydratase (Pyrobaculum aerophilum (strain ATCC 51768 / DSM 7523 / JCM 9630 / CIP 104966 / NBRC 100827 / IM2)).